Consider the following 681-residue polypeptide: MSEPRKILVTSALPYANGSIHLGHMLEYIQTDMWVRFQKLRGNQCIYVCADDAHGSAIMLRAEKEGITPEQLIANVQAEHCADFAEFLVDFDNFHSTHAEENRELSSQIYLKLRDAGHIATRSITQYFDPEKKMFLADRFIKGTCPKCGTEDQYGDNCEKCGATYAPTDLKDPKSAISGATPVLKDSQHFFFKLPDFQQMLQSWTRSGTLQDAVANKIAEWLDAGLQQWDISRDAPYFGFEIPDEPGKYFYVWLDAPIGYMASFKNLCSRRPELDFDAFWGKDSTAELYHFIGKDIVNFHALFWPAMLEGAGYRKPTGINVHGYLTVNGQKMSKSRGTFIKARTYLEHLSPEYLRYYYASKLGRGVDDLDLNLEDFVQKVNSDLVGKVVNIASRCAGFIHKGNAGVMVDSNAAPELTEAFLAAAPSIADAYEARDFARAMREIMGLADRANAWIADKAPWSLNKQEGKQDEVQAICATGIILFRQLVIFLKPVLPLLAADAEAFLNVAPLTWNDHQQLLANHQLNKFKPLMTRIDPVKVQAMTDASKEDLAASQTDTGGPKGNGELVKDPLSAEIDFDAFAAIDLRVALIVKAEAVEGADKLLRLTLDIGDEQRNVFSGIKSAYPDPSKLDGRLTMMIANLKPRKMKFGISEGMVMAAGPGGEEIYLLSPDSGAKPGQRIK.

Positions P14–H24 match the 'HIGH' region motif. Residues C145, C148, C158, and C161 each coordinate Zn(2+). The 'KMSKS' region motif lies at K331 to S335. K334 serves as a coordination point for ATP. A tRNA-binding domain is found at A579–K681.

This sequence belongs to the class-I aminoacyl-tRNA synthetase family. MetG type 1 subfamily. In terms of assembly, homodimer. Requires Zn(2+) as cofactor.

The protein localises to the cytoplasm. It carries out the reaction tRNA(Met) + L-methionine + ATP = L-methionyl-tRNA(Met) + AMP + diphosphate. In terms of biological role, is required not only for elongation of protein synthesis but also for the initiation of all mRNA translation through initiator tRNA(fMet) aminoacylation. This is Methionine--tRNA ligase from Pseudomonas fluorescens (strain ATCC BAA-477 / NRRL B-23932 / Pf-5).